A 76-amino-acid chain; its full sequence is ATP synthase subunit c (76 aa).

Transmembrane regions (helical) follow at residues 8–28 and 55–75; these read LLAA…GVGI and VAFA…LIFV.

The protein belongs to the ATPase C chain family. In terms of assembly, F-type ATPases have 2 components, F(1) - the catalytic core - and F(0) - the membrane proton channel. F(1) has five subunits: alpha(3), beta(3), gamma(1), delta(1), epsilon(1). F(0) has three main subunits: a(1), b(2) and c(10-14). The alpha and beta chains form an alternating ring which encloses part of the gamma chain. F(1) is attached to F(0) by a central stalk formed by the gamma and epsilon chains, while a peripheral stalk is formed by the delta and b chains.

The protein localises to the cell membrane. Functionally, f(1)F(0) ATP synthase produces ATP from ADP in the presence of a proton or sodium gradient. F-type ATPases consist of two structural domains, F(1) containing the extramembraneous catalytic core and F(0) containing the membrane proton channel, linked together by a central stalk and a peripheral stalk. During catalysis, ATP synthesis in the catalytic domain of F(1) is coupled via a rotary mechanism of the central stalk subunits to proton translocation. Key component of the F(0) channel; it plays a direct role in translocation across the membrane. A homomeric c-ring of between 10-14 subunits forms the central stalk rotor element with the F(1) delta and epsilon subunits. The polypeptide is ATP synthase subunit c (Dehalococcoides mccartyi (strain ATCC BAA-2266 / KCTC 15142 / 195) (Dehalococcoides ethenogenes (strain 195))).